We begin with the raw amino-acid sequence, 77 residues long: Acyl carrier protein (77 aa).

The Carrier domain maps to 2 to 77 (SDIADRVKKI…DAVKFISEAA (76 aa)). The residue at position 37 (Ser37) is an O-(pantetheine 4'-phosphoryl)serine.

This sequence belongs to the acyl carrier protein (ACP) family. 4'-phosphopantetheine is transferred from CoA to a specific serine of apo-ACP by AcpS. This modification is essential for activity because fatty acids are bound in thioester linkage to the sulfhydryl of the prosthetic group.

Its subcellular location is the cytoplasm. It functions in the pathway lipid metabolism; fatty acid biosynthesis. In terms of biological role, carrier of the growing fatty acid chain in fatty acid biosynthesis. The chain is Acyl carrier protein from Cereibacter sphaeroides (strain ATCC 17029 / ATH 2.4.9) (Rhodobacter sphaeroides).